A 1691-amino-acid polypeptide reads, in one-letter code: Protein TIC 214 (1691 aa).

Transmembrane regions (helical) follow at residues 19–39 (MLLG…SQIL), 60–80 (VLAQ…LLLL), 84–104 (LLTI…KDFP), 123–143 (LFLI…NSVL), 158–178 (TVFM…FNFF), and 200–220 (FIYA…LGRA). The tract at residues 819 to 839 (EKQHTLQRKHKEIGSKSRELK) is disordered.

Belongs to the TIC214 family. In terms of assembly, part of the Tic complex.

The protein localises to the plastid. Its subcellular location is the chloroplast inner membrane. Its function is as follows. Involved in protein precursor import into chloroplasts. May be part of an intermediate translocation complex acting as a protein-conducting channel at the inner envelope. The chain is Protein TIC 214 from Adiantum capillus-veneris (Maidenhair fern).